An 836-amino-acid chain; its full sequence is MSLSHLYRDGEGHMDDDEDERENFEITDWDLQNEFNPNRQRHWQTKEEATYGVWAERDSDEERPSFGGKRARDYSAPVNFISAGLKKGAAEEAELEDSDDEEKPVKQDEFPKDFGPKKLKTGGNFKPSQKGFAGGTKSFMDFGSWERHTKGIGQKLLQKMGYVPGRGLGKNAQGIINPIEAKQRKGKGAVGAYGSERTTQSLQDFPVVDSEEEAEEEFQKELSQWRKDPSGSKKKPKYSYKTVEELKAKGRISKKLSAPQKEISQVKVIDMTGREQKVYYSYSQISHKHNVPDDGLPLQSQLPQPGKEAKAPGFALPELEHNLQLLIELTEQEIIQNDRQLQYERDMVVNLSHELEKMAEVLEHEERVISNLSKVLEMVEECERRLQPGCSNPLTLDECARIFETLQDKYYEEYRMSDRVDLAVAIVYPLMKDYFKEWDPLKDCTYGTEIISKWKSLLENDQLLSHGGQDLSADAFHRLIWEVWMPFVRNIVTQWQPRNCDPMVDFLDSWVHIIPVWILDNILDQLVFPKLQKEVENWNPLTDTVPIHSWIHPWLPLMQARLEPLYSPIRSKLASALQKWHPSDSSAKLILQPWKDVFTPGSWEAFMVKNIVPKLGMCLGELVINPHQQHMDAFYWVIDWEGMISVSSLVGLLEKHFFPKWLQVLCSWLSNSPNYEEITKWYLGWKSMFSDQVLAHPSVKDKFNEALDIMNRAVSSNVGAYMQPGARENIAYLTHTERRKDFQYEAMQERREAENMAQRGIGVAASSVPMNFKDLIETKAEEHNIVFMPVIGKRHEGKQLYTFGRIVIYIDRGVVFVQGEKTWVPTSLQSLIDMAK.

Residues 1–13 (MSLSHLYRDGEGH) show a composition bias toward basic and acidic residues. 3 disordered regions span residues 1 to 31 (MSLS…DWDL), 54 to 73 (WAER…RARD), and 85 to 136 (LKKG…AGGT). Residues 1–50 (MSLSHLYRDGEGHMDDDEDERENFEITDWDLQNEFNPNRQRHWQTKEEAT) form a required for interaction with DHX15 region. The residue at position 2 (Ser2) is a Phosphoserine. Acidic residues predominate over residues 14-28 (MDDDEDERENFEITD). Residues 54–64 (WAERDSDEERP) show a composition bias toward basic and acidic residues. Phosphoserine is present on residues Ser59 and Ser98. The span at 91–102 (EEAELEDSDDEE) shows a compositional bias: acidic residues. Residues 103–116 (KPVKQDEFPKDFGP) are compositionally biased toward basic and acidic residues. A Phosphoserine modification is found at Ser144. In terms of domain architecture, G-patch spans 149 to 195 (TKGIGQKLLQKMGYVPGRGLGKNAQGIINPIEAKQRKGKGAVGAYGS). The segment at 183 to 236 (QRKGKGAVGAYGSERTTQSLQDFPVVDSEEEAEEEFQKELSQWRKDPSGSKKKP) is disordered. Ser210 carries the post-translational modification Phosphoserine. The span at 217–231 (EFQKELSQWRKDPSG) shows a compositional bias: basic and acidic residues. The Nuclear localization signal motif lies at 699–704 (VKDKFN). The tract at residues 709 to 733 (IMNRAVSSNVGAYMQPGARENIAYL) is required for nuclear speckle localization.

The protein belongs to the TFP11/STIP family. Identified in the spliceosome C complex. Found in the Intron Large (IL) complex, a post-mRNA release spliceosomal complex containing the excised intron, U2, U5 and U6 snRNPs, and splicing factors. Interacts with TUFT1. Interacts with DHX15; indicative for a recruitment of DHX15 to the IL complex. Interacts with GCFC2.

Its subcellular location is the cytoplasm. It is found in the nucleus. Functionally, involved in pre-mRNA splicing, specifically in spliceosome disassembly during late-stage splicing events. Intron turnover seems to proceed through reactions in two lariat-intron associated complexes termed Intron Large (IL) and Intron Small (IS). In cooperation with DHX15 seems to mediate the transition of the U2, U5 and U6 snRNP-containing IL complex to the snRNP-free IS complex leading to efficient debranching and turnover of excised introns. May play a role in the differentiation of ameloblasts and odontoblasts or in the forming of the enamel extracellular matrix. The chain is Tuftelin-interacting protein 11 (TFIP11) from Sus scrofa (Pig).